The following is a 173-amino-acid chain: NADH-ubiquinone oxidoreductase chain 6 (173 aa).

Transmembrane regions (helical) follow at residues 1-21 (MTYF…AVAS), 27-47 (YGVV…LSLG), 48-68 (VSFV…VVFV), 87-107 (VVGY…VGGF), 113-133 (FGVV…FSGV), and 139-159 (CGVG…FVVL).

Belongs to the complex I subunit 6 family.

It is found in the mitochondrion membrane. The catalysed reaction is a ubiquinone + NADH + 5 H(+)(in) = a ubiquinol + NAD(+) + 4 H(+)(out). Its function is as follows. Core subunit of the mitochondrial membrane respiratory chain NADH dehydrogenase (Complex I) that is believed to belong to the minimal assembly required for catalysis. Complex I functions in the transfer of electrons from NADH to the respiratory chain. The immediate electron acceptor for the enzyme is believed to be ubiquinone. In Cepphus grylle (Black guillemot), this protein is NADH-ubiquinone oxidoreductase chain 6 (MT-ND6).